The sequence spans 197 residues: METAQPPISYAPPKRGAVCAYVRTVVTTTTVSDSGGNNEDRLTQIVAQLQRTRLNFSKLSQLQRRRVRNMQKLIRKKNSVIANLAARLTTQKKTKHFAVTIRKNVIHTTSGSEQFVRQRVLELCANGGEQVFCARRADCARDRRRVAEALATALGAGVVASAANKRFEIEDEEKLVSAKLIVQQVLHDGDHSDTCAD.

Functionally, this protein is required for viral late gene expression. In Orgyia pseudotsugata (Douglas-fir tussock moth), this protein is Putative early 21.8 kDa protein (DA26).